The sequence spans 123 residues: Cell division protein SepF (123 aa).

This sequence belongs to the SepF family. In terms of assembly, homodimer. Interacts with FtsZ.

It localises to the cytoplasm. Cell division protein that is part of the divisome complex and is recruited early to the Z-ring. Probably stimulates Z-ring formation, perhaps through the cross-linking of FtsZ protofilaments. Its function overlaps with FtsA. This Tropheryma whipplei (strain TW08/27) (Whipple's bacillus) protein is Cell division protein SepF.